The following is a 455-amino-acid chain: Protein FAM124B (455 aa).

Ser49 bears the Phosphoserine mark. Positions 270–322 are disordered; sequence TSVSAKRTSEPRSQRNQGKRSQGHSLELPEPSGSPTSDRCAGTSWKSPGRSFQ. Polar residues predominate over residues 313 to 322; it reads SWKSPGRSFQ.

Belongs to the FAM124 family. Interacts with CHD7 and CHD8.

It is found in the nucleus. The chain is Protein FAM124B (FAM124B) from Homo sapiens (Human).